The chain runs to 92 residues: Small ribosomal subunit protein uS19c (92 aa).

Belongs to the universal ribosomal protein uS19 family.

Its subcellular location is the plastid. It localises to the chloroplast. Functionally, protein S19 forms a complex with S13 that binds strongly to the 16S ribosomal RNA. In Nasturtium officinale (Watercress), this protein is Small ribosomal subunit protein uS19c.